Consider the following 359-residue polypeptide: MATH domain and coiled-coil domain-containing protein At2g42475 (359 aa).

Positions 6–128 constitute an MATH domain; sequence KTSFTFEIEN…NDKLIITVEV (123 aa). Residues 146–337 are a coiled coil; sequence EFKELQDLYN…NLELMVLDFK (192 aa).

This is MATH domain and coiled-coil domain-containing protein At2g42475 from Arabidopsis thaliana (Mouse-ear cress).